We begin with the raw amino-acid sequence, 202 residues long: Glycerol-3-phosphate acyltransferase (202 aa).

The next 5 helical transmembrane spans lie at 3-23 (NLIIYAFIYLLSSIPFGLILA), 87-107 (LLWSVAVLAILGHCFSIYLLF), 118-138 (GAMIVLLPLEVLTAFIVWVVI), 144-164 (ISSLASLAALLAFVVSSFIFN), and 167-187 (LEIHTHAPVFIIAFIIVYKHL).

This sequence belongs to the PlsY family. Probably interacts with PlsX.

The protein localises to the cell inner membrane. The catalysed reaction is an acyl phosphate + sn-glycerol 3-phosphate = a 1-acyl-sn-glycero-3-phosphate + phosphate. It functions in the pathway lipid metabolism; phospholipid metabolism. Catalyzes the transfer of an acyl group from acyl-phosphate (acyl-PO(4)) to glycerol-3-phosphate (G3P) to form lysophosphatidic acid (LPA). This enzyme utilizes acyl-phosphate as fatty acyl donor, but not acyl-CoA or acyl-ACP. This chain is Glycerol-3-phosphate acyltransferase, found in Campylobacter jejuni (strain RM1221).